Reading from the N-terminus, the 338-residue chain is Fructose-1,6-bisphosphatase 1 (338 aa).

The residue at position 2 (T2) is an N-acetylthreonine. AMP is bound by residues 18 to 22 and 28 to 32; these read VMEEG and TGEMT. Residues D69 and E98 each contribute to the Mg(2+) site. 113 to 114 contributes to the AMP binding site; the sequence is KY. Mg(2+) is bound by residues D119, L121, and D122. 122-125 provides a ligand contact to substrate; sequence DGSS. R141 contributes to the AMP binding site. N6-succinyllysine is present on K151. Residue S208 is modified to Phosphoserine; by PKA. Residues 213–216, 244–249, Y265, and 275–277 contribute to the substrate site; these read NEGY, RYVGSM, and KLR. Residues Y216, Y245, and Y265 each carry the phosphotyrosine modification. E281 contacts Mg(2+).

This sequence belongs to the FBPase class 1 family. Homotetramer. Mg(2+) serves as cofactor.

It catalyses the reaction beta-D-fructose 1,6-bisphosphate + H2O = beta-D-fructose 6-phosphate + phosphate. It functions in the pathway carbohydrate biosynthesis; gluconeogenesis. Its activity is regulated as follows. Subject to complex allosteric regulation. The enzyme can assume an active R-state, or an inactive T-state. Intermediate conformations may exist. AMP acts as an allosteric inhibitor. AMP binding affects the turnover of bound substrate and not the affinity for substrate. Fructose 2,6-bisphosphate acts as a competitive inhibitor. Fructose 2,6-bisphosphate and AMP have synergistic effects. Its function is as follows. Catalyzes the hydrolysis of fructose 1,6-bisphosphate to fructose 6-phosphate in the presence of divalent cations, acting as a rate-limiting enzyme in gluconeogenesis. Plays a role in regulating glucose sensing and insulin secretion of pancreatic beta-cells. Appears to modulate glycerol gluconeogenesis in liver. Important regulator of appetite and adiposity; increased expression of the protein in liver after nutrient excess increases circulating satiety hormones and reduces appetite-stimulating neuropeptides and thus seems to provide a feedback mechanism to limit weight gain. The chain is Fructose-1,6-bisphosphatase 1 (FBP1) from Sus scrofa (Pig).